The sequence spans 361 residues: Protein phosphatase 1 regulatory subunit 7 (361 aa).

Residues 1–64 (MAAERGAGQQ…RGAEDPEEEH (64 aa)) form a disordered region. N-acetylalanine is present on Ala-2. Phosphoserine is present on residues Ser-12, Ser-24, Ser-27, Ser-45, and Ser-48. Residues 17–34 (EVDRRVESEESGDEEGKK) are compositionally biased toward basic and acidic residues. The span at 48 to 58 (SLKDGVDRGAE) shows a compositional bias: basic and acidic residues. LRR repeat units lie at residues 78–99 (DAED…EVLK), 100–121 (KVKS…EELQ), 122–143 (SLRE…EALT), 144–165 (ELEV…DKLT), 166–187 (QLKK…SNLH), 188–209 (QLQM…DTLT), 210–231 (NLES…DALT), 232–253 (NLTV…QSLV), 254–275 (NLRE…ENNN), 276–297 (KLTM…SHLT), and 298–319 (ELQE…DELK). Phosphoserine is present on Ser-323. In terms of domain architecture, LRRCT spans 332–361 (NPLQKDPQYRRKVMLALPSVRQIDATYVRF).

It belongs to the SDS22 family. As to quaternary structure, interacts with PPP1CA, PPP1CB and PPP1CC/PPP1G. Widely expressed with high level in testis. Expression increases during puberty. Expressed in spermatids and probably also in spermatozoa.

The protein resides in the nucleus. In terms of biological role, regulatory subunit of protein phosphatase 1. The sequence is that of Protein phosphatase 1 regulatory subunit 7 (Ppp1r7) from Mus musculus (Mouse).